A 270-amino-acid chain; its full sequence is Phospholysine phosphohistidine inorganic pyrophosphate phosphatase (270 aa).

Mg(2+) is bound by residues aspartate 14 and serine 16. Substrate-binding positions include 14-16 (DVS), 52-53 (TN), and lysine 187. Aspartate 212 lines the Mg(2+) pocket.

The protein belongs to the HAD-like hydrolase superfamily. Mg(2+) is required as a cofactor.

The protein localises to the cytoplasm. It is found in the nucleus. The catalysed reaction is diphosphate + H2O = 2 phosphate + H(+). Functionally, phosphatase that hydrolyzes imidodiphosphate, 3-phosphohistidine and 6-phospholysine. Has broad substrate specificity and can also hydrolyze inorganic diphosphate, but with lower efficiency. In Xenopus laevis (African clawed frog), this protein is Phospholysine phosphohistidine inorganic pyrophosphate phosphatase (lhpp).